Here is a 65-residue protein sequence, read N- to C-terminus: Pancreatic polypeptide prohormone (65 aa).

Tyrosine amide is present on tyrosine 36. Positions 59 to 65 (ELSPMGA) are excised as a propeptide.

Belongs to the NPY family.

The protein localises to the secreted. Its function is as follows. Hormone secreted by pancreatic cells that acts as a regulator of pancreatic and gastrointestinal functions probably by signaling through the G protein-coupled receptor NPY4R2. This is Pancreatic polypeptide prohormone (PPY) from Sus scrofa (Pig).